A 144-amino-acid polypeptide reads, in one-letter code: Large ribosomal subunit protein eL27 (144 aa).

This sequence belongs to the eukaryotic ribosomal protein eL27 family.

Its subcellular location is the cytoplasm. This is Large ribosomal subunit protein eL27 (RPL27) from Tetrahymena thermophila.